The primary structure comprises 310 residues: ADP-L-glycero-D-manno-heptose-6-epimerase (310 aa).

NADP(+) contacts are provided by residues 10–11, 31–32, K38, K53, 75–79, and N92; these read FI, DN, and EGACS. Y140 functions as the Proton acceptor in the catalytic mechanism. An NADP(+)-binding site is contributed by K144. N169 contacts substrate. V170 and K178 together coordinate NADP(+). K178 (proton acceptor) is an active-site residue. Substrate contacts are provided by residues S180, H187, 201 to 204, R209, and Y272; that span reads FEGS.

It belongs to the NAD(P)-dependent epimerase/dehydratase family. HldD subfamily. As to quaternary structure, homopentamer. NADP(+) is required as a cofactor.

It carries out the reaction ADP-D-glycero-beta-D-manno-heptose = ADP-L-glycero-beta-D-manno-heptose. Its pathway is nucleotide-sugar biosynthesis; ADP-L-glycero-beta-D-manno-heptose biosynthesis; ADP-L-glycero-beta-D-manno-heptose from D-glycero-beta-D-manno-heptose 7-phosphate: step 4/4. Functionally, catalyzes the interconversion between ADP-D-glycero-beta-D-manno-heptose and ADP-L-glycero-beta-D-manno-heptose via an epimerization at carbon 6 of the heptose. This chain is ADP-L-glycero-D-manno-heptose-6-epimerase, found in Salmonella arizonae (strain ATCC BAA-731 / CDC346-86 / RSK2980).